The chain runs to 273 residues: 4-hydroxy-tetrahydrodipicolinate reductase (273 aa).

NAD(+) contacts are provided by residues 12 to 17 (GAGGRM) and Glu38. Arg39 is a binding site for NADP(+). Residues 102–104 (GTT) and 126–129 (AANF) contribute to the NAD(+) site. Residue His159 is the Proton donor/acceptor of the active site. His160 contacts (S)-2,3,4,5-tetrahydrodipicolinate. Lys163 acts as the Proton donor in catalysis. 169–170 (GT) is a (S)-2,3,4,5-tetrahydrodipicolinate binding site.

This sequence belongs to the DapB family. As to quaternary structure, homotetramer.

It is found in the cytoplasm. The enzyme catalyses (S)-2,3,4,5-tetrahydrodipicolinate + NAD(+) + H2O = (2S,4S)-4-hydroxy-2,3,4,5-tetrahydrodipicolinate + NADH + H(+). The catalysed reaction is (S)-2,3,4,5-tetrahydrodipicolinate + NADP(+) + H2O = (2S,4S)-4-hydroxy-2,3,4,5-tetrahydrodipicolinate + NADPH + H(+). Its pathway is amino-acid biosynthesis; L-lysine biosynthesis via DAP pathway; (S)-tetrahydrodipicolinate from L-aspartate: step 4/4. Catalyzes the conversion of 4-hydroxy-tetrahydrodipicolinate (HTPA) to tetrahydrodipicolinate. The sequence is that of 4-hydroxy-tetrahydrodipicolinate reductase from Yersinia pseudotuberculosis serotype O:1b (strain IP 31758).